A 628-amino-acid polypeptide reads, in one-letter code: uncharacterized protein (628 aa).

Disordered regions lie at residues 1–65 and 80–125; these read MDTN…ISSA and SLRN…VSLS. The span at 12-21 shows a compositional bias: low complexity; that stretch reads ISPSIASSFP. Polar residues predominate over residues 25-37; sequence PFSSQNSTTSNPE. Composition is skewed to low complexity over residues 48–64 and 87–102; these read SSII…NISS and SPHI…SSSS. The segment covering 103 to 116 has biased composition (basic and acidic residues); sequence DLDKSMLDEKHPDS. The next 12 membrane-spanning stretches (helical) occupy residues 157-177, 203-223, 230-250, 259-279, 294-314, 324-344, 417-437, 454-474, 483-503, 511-531, 542-562, and 583-603; these read IITC…SISL, VGTG…NLLM, LWLS…AVLG, FIAL…GFAF, IGWY…LSAA, LYGY…QGLF, LWPP…LVNY, VSLL…TVLP, MLFF…TTFV, VGLL…MTWV, VGVA…SVVA, and MCGM…VQKF.

The protein belongs to the major facilitator superfamily. Allantoate permease family.

It localises to the membrane. This is an uncharacterized protein from Schizosaccharomyces pombe (strain 972 / ATCC 24843) (Fission yeast).